The sequence spans 162 residues: NADH-quinone oxidoreductase subunit I (162 aa).

4Fe-4S ferredoxin-type domains lie at 54–83 (RRYE…INST) and 93–122 (SSYE…ETNI). Residues cysteine 63, cysteine 66, cysteine 69, cysteine 73, cysteine 102, cysteine 105, cysteine 108, and cysteine 112 each contribute to the [4Fe-4S] cluster site.

Belongs to the complex I 23 kDa subunit family. In terms of assembly, NDH-1 is composed of 14 different subunits. Subunits NuoA, H, J, K, L, M, N constitute the membrane sector of the complex. [4Fe-4S] cluster serves as cofactor.

Its subcellular location is the cell inner membrane. It carries out the reaction a quinone + NADH + 5 H(+)(in) = a quinol + NAD(+) + 4 H(+)(out). Functionally, NDH-1 shuttles electrons from NADH, via FMN and iron-sulfur (Fe-S) centers, to quinones in the respiratory chain. The immediate electron acceptor for the enzyme in this species is believed to be ubiquinone. Couples the redox reaction to proton translocation (for every two electrons transferred, four hydrogen ions are translocated across the cytoplasmic membrane), and thus conserves the redox energy in a proton gradient. This Francisella philomiragia subsp. philomiragia (strain ATCC 25017 / CCUG 19701 / FSC 153 / O#319-036) protein is NADH-quinone oxidoreductase subunit I.